Reading from the N-terminus, the 417-residue chain is MAEIKNYTLNFGPQHPAAHGVLRLVLELDGEVIQRADPHIGLLHRATEKLAETKTFIQSVPYMDRLDYVSMMVNEHGYVMAIEKLLGIDVPVRAQYIRVMFDEITRVLNHLMWIGAHALDVGAMAVFLYAFREREDLMDVYEAVSGARMHAAYYRPGGVYRDLPDAMPQYKASKIRNAKALSKMNENRQGSLLDFIDDFFTRFPKCVDEYETLLTDNRIWKQRLVGIGVVSPERALNLGMTGAMLRGSGIEWDLRKKQPYEVYDKLDFDIPVGVNGDCYDRYLVRVEEMRQSTRIVKQCVEWLRKNPGPVMIDNHKVAPPSRVGMKSNMEELIHHFKLFTEGFHVPEGEAYAAVEHPKGEFGIYLISDGANKPYRLKIRAPGYAHLSTLDEMARGHMIADAVTIIGTQDIVFGEVDR.

It belongs to the complex I 49 kDa subunit family. NDH-1 is composed of 14 different subunits. Subunits NuoB, C, D, E, F, and G constitute the peripheral sector of the complex.

It localises to the cell inner membrane. The catalysed reaction is a quinone + NADH + 5 H(+)(in) = a quinol + NAD(+) + 4 H(+)(out). Its function is as follows. NDH-1 shuttles electrons from NADH, via FMN and iron-sulfur (Fe-S) centers, to quinones in the respiratory chain. The immediate electron acceptor for the enzyme in this species is believed to be ubiquinone. Couples the redox reaction to proton translocation (for every two electrons transferred, four hydrogen ions are translocated across the cytoplasmic membrane), and thus conserves the redox energy in a proton gradient. The polypeptide is NADH-quinone oxidoreductase subunit D (Paraburkholderia xenovorans (strain LB400)).